The primary structure comprises 291 residues: N-acetylmannosamine kinase (291 aa).

ATP is bound by residues 5-12 and 132-139; these read AIDIGGTK and GVGGGVVS. His156, Cys166, Cys168, and Cys173 together coordinate Zn(2+).

This sequence belongs to the ROK (NagC/XylR) family. NanK subfamily. In terms of assembly, homodimer.

It catalyses the reaction an N-acyl-D-mannosamine + ATP = an N-acyl-D-mannosamine 6-phosphate + ADP + H(+). Its pathway is amino-sugar metabolism; N-acetylneuraminate degradation; D-fructose 6-phosphate from N-acetylneuraminate: step 2/5. In terms of biological role, catalyzes the phosphorylation of N-acetylmannosamine (ManNAc) to ManNAc-6-P. This chain is N-acetylmannosamine kinase, found in Escherichia coli (strain 55989 / EAEC).